The following is a 274-amino-acid chain: MEPILQESDSRFVIFPIKYHDIWKMYKQSVASFWTVEEVDLSKDLDDWDKLTKDEKYFIKHILAFFASSDGIVNENLAERFYVDVQCSEARCFYGFQIAMENIHSEMYSLLIDTYVRDNIEKMHLFNAIETMECVKKKADWARKWISSNKVYGERVVAFAAVEGIFFSGSFAAIFWIKKRGLMPGLTFSNELISRDEGLHCDFACLMFKHLLHPPSKEVITSIIIDAVNIEKEFLTVAIPVDLIGMNCCLMSQYIEFVADRLLTELGCEKSQCI.

Fe cation contacts are provided by D70, E101, and H104. The active site involves Y108. Residues E163, E197, and H200 each coordinate Fe cation.

It belongs to the ribonucleoside diphosphate reductase small chain family. Heterodimer of a large and a small chain. The cofactor is Fe cation.

The enzyme catalyses a 2'-deoxyribonucleoside 5'-diphosphate + [thioredoxin]-disulfide + H2O = a ribonucleoside 5'-diphosphate + [thioredoxin]-dithiol. Functionally, ribonucleoside-diphosphate reductase holoenzyme provides the precursors necessary for viral DNA synthesis. Allows virus growth in non-dividing cells. Catalyzes the biosynthesis of deoxyribonucleotides from the corresponding ribonucleotides. The chain is Ribonucleoside-diphosphate reductase small chain from Sus scrofa (Pig).